Reading from the N-terminus, the 166-residue chain is Ribosome maturation factor RimM (166 aa).

The 73-residue stretch at 91 to 163 (DDGFYDHELE…TCVITPPEGL (73 aa)) folds into the PRC barrel domain.

This sequence belongs to the RimM family. As to quaternary structure, binds ribosomal protein uS19.

The protein resides in the cytoplasm. In terms of biological role, an accessory protein needed during the final step in the assembly of 30S ribosomal subunit, possibly for assembly of the head region. Essential for efficient processing of 16S rRNA. May be needed both before and after RbfA during the maturation of 16S rRNA. It has affinity for free ribosomal 30S subunits but not for 70S ribosomes. This Corynebacterium diphtheriae (strain ATCC 700971 / NCTC 13129 / Biotype gravis) protein is Ribosome maturation factor RimM.